Consider the following 103-residue polypeptide: ATP-dependent Clp protease adapter protein ClpS 2 (103 aa).

This sequence belongs to the ClpS family. As to quaternary structure, binds to the N-terminal domain of the chaperone ClpA.

Involved in the modulation of the specificity of the ClpAP-mediated ATP-dependent protein degradation. The polypeptide is ATP-dependent Clp protease adapter protein ClpS 2 (Agrobacterium fabrum (strain C58 / ATCC 33970) (Agrobacterium tumefaciens (strain C58))).